The following is a 310-amino-acid chain: MKPAIPPTINLHTIRACNYGCKYCFAGFQDCDTGVMPQADLHEILRQFAATTGMAIHPAKVNFAGGEPMLSPTFVEDICYAKSLGLTTSLVTNGSLLSERLLDKLSGQLDLLTISIDSLKPGTNRAIGRTNRQNPLTVSEYLDRILKARTRGITVKLNTVVNRLNLDEDMTDFIREAQPIRWKLFKVLKIQNENSAHFDSWAIRDEEFVHFVERHRKVESSGVTLVPESNEQMYGTYGIISPDGRFIDNSQGTHRYSPRIVDVGITQAFADVNFSMAGFQQRGGIYSIKRSTTNRSLQTSALHPKRELTK.

Residues 3–221 form the Radical SAM core domain; that stretch reads PAIPPTINLH…VERHRKVESS (219 aa). [4Fe-4S] cluster contacts are provided by cysteine 17, cysteine 21, and cysteine 24.

It belongs to the radical SAM superfamily. Viperin family. Requires [4Fe-4S] cluster as cofactor.

It catalyses the reaction GTP + AH2 + S-adenosyl-L-methionine = 3'-deoxy-3',4'-didehydro-GTP + 5'-deoxyadenosine + L-methionine + A + H2O + H(+). Functionally, expression of pVip15 in E.coli (strain MG1655) confers resistance to phage T7; prevents culture collapse upon infection. Catalyzes the conversion of guanosine triphosphate (GTP) to 3'-deoxy-3',4'-didehydro-GTP (ddhGTP), probably via a SAM-dependent radical mechanism. The modified nucleotide represses transcription from T7 RNA polymerase-directed genes (possibly by acting as chain terminators), strongly suggesting these nucleotides block viral polymerase transcription. The protein is S-adenosylmethionine-dependent nucleotide dehydratase of Coraliomargarita akajimensis (strain DSM 45221 / IAM 15411 / JCM 23193 / KCTC 12865 / 04OKA010-24).